Consider the following 365-residue polypeptide: HVDHGKTTLTAAITTVLAKKYGGSARAFDQIDNAPEEKARGITINTSHVEYDTSLRHYAHVDCPGHADYIKNMITGAAQMDGAILVVAATDGPMPQTREHILLGRQVGVPYIVVFLNKCDMVDDEELLELVEMEVRDLLTQYDFPGDKTPIIRGSALKALEGDCIWESKIIDLANILDTYIPEPKRSIDQPFLLPIEDVFSISGRGTVVTGRVERGIIKVGEEVEIVGIKPTSKTICTGVEMFRKLLDEGRAGENVGVLLRGTKRDDIERGQVLSKPGTITPHIKFESEVYVLSKEEGGRHTPFFKGYRPQFYFRTTDVTGYVELPEGIEMVMPGDNVKMVVTLIHPIAMSDGLRFAIREGGRTV.

Residues 1–7 (HVDHGKT), 62–66 (DCPGH), and 117–120 (NKCD) each bind GTP. Residues 1–185 (HVDHGKTTLT…ILDTYIPEPK (185 aa)) form the tr-type G domain. Residue threonine 7 participates in Mg(2+) binding.

It belongs to the TRAFAC class translation factor GTPase superfamily. Classic translation factor GTPase family. EF-Tu/EF-1A subfamily. As to quaternary structure, monomer.

The protein localises to the cytoplasm. It carries out the reaction GTP + H2O = GDP + phosphate + H(+). Functionally, GTP hydrolase that promotes the GTP-dependent binding of aminoacyl-tRNA to the A-site of ribosomes during protein biosynthesis. This is Elongation factor Tu from Buchnera aphidicola subsp. Melaphis rhois.